A 1387-amino-acid chain; its full sequence is DNA-directed RNA polymerase subunit beta (1387 aa).

It belongs to the RNA polymerase beta chain family. As to quaternary structure, the RNAP catalytic core consists of 2 alpha, 1 beta, 1 beta' and 1 omega subunit. When a sigma factor is associated with the core the holoenzyme is formed, which can initiate transcription.

The catalysed reaction is RNA(n) + a ribonucleoside 5'-triphosphate = RNA(n+1) + diphosphate. Its function is as follows. DNA-dependent RNA polymerase catalyzes the transcription of DNA into RNA using the four ribonucleoside triphosphates as substrates. This is DNA-directed RNA polymerase subunit beta from Xanthomonas campestris pv. campestris (strain 8004).